Reading from the N-terminus, the 427-residue chain is Glutamate-1-semialdehyde 2,1-aminomutase (427 aa).

The residue at position 268 (lysine 268) is an N6-(pyridoxal phosphate)lysine.

It belongs to the class-III pyridoxal-phosphate-dependent aminotransferase family. HemL subfamily. The cofactor is pyridoxal 5'-phosphate.

The protein resides in the cytoplasm. The catalysed reaction is (S)-4-amino-5-oxopentanoate = 5-aminolevulinate. It functions in the pathway porphyrin-containing compound metabolism; protoporphyrin-IX biosynthesis; 5-aminolevulinate from L-glutamyl-tRNA(Glu): step 2/2. The protein is Glutamate-1-semialdehyde 2,1-aminomutase of Methanococcus maripaludis (strain C6 / ATCC BAA-1332).